A 456-amino-acid chain; its full sequence is UPF0210 protein Dde_3704 (456 aa).

Belongs to the UPF0210 family. In terms of assembly, homodimer.

This is UPF0210 protein Dde_3704 from Oleidesulfovibrio alaskensis (strain ATCC BAA-1058 / DSM 17464 / G20) (Desulfovibrio alaskensis).